The chain runs to 245 residues: UPF0328 protein ECU09_2010 (245 aa).

The protein belongs to the UPF0328 family.

This Encephalitozoon cuniculi (strain GB-M1) (Microsporidian parasite) protein is UPF0328 protein ECU09_2010.